A 906-amino-acid polypeptide reads, in one-letter code: Protein translocase subunit SecA (906 aa).

ATP is bound by residues Gln89, 107–111 (GEGKT), and Asp501. Positions 891, 893, 902, and 903 each coordinate Zn(2+).

Belongs to the SecA family. In terms of assembly, monomer and homodimer. Part of the essential Sec protein translocation apparatus which comprises SecA, SecYEG and auxiliary proteins SecDF-YajC and YidC. The cofactor is Zn(2+).

The protein localises to the cell inner membrane. It localises to the cytoplasm. The enzyme catalyses ATP + H2O + cellular proteinSide 1 = ADP + phosphate + cellular proteinSide 2.. In terms of biological role, part of the Sec protein translocase complex. Interacts with the SecYEG preprotein conducting channel. Has a central role in coupling the hydrolysis of ATP to the transfer of proteins into and across the cell membrane, serving both as a receptor for the preprotein-SecB complex and as an ATP-driven molecular motor driving the stepwise translocation of polypeptide chains across the membrane. This chain is Protein translocase subunit SecA, found in Parvibaculum lavamentivorans (strain DS-1 / DSM 13023 / NCIMB 13966).